The primary structure comprises 246 residues: 1-(5-phosphoribosyl)-5-[(5-phosphoribosylamino)methylideneamino] imidazole-4-carboxamide isomerase (246 aa).

Catalysis depends on D12, which acts as the Proton acceptor. The Proton donor role is filled by D134.

It belongs to the HisA/HisF family.

It localises to the cytoplasm. It catalyses the reaction 1-(5-phospho-beta-D-ribosyl)-5-[(5-phospho-beta-D-ribosylamino)methylideneamino]imidazole-4-carboxamide = 5-[(5-phospho-1-deoxy-D-ribulos-1-ylimino)methylamino]-1-(5-phospho-beta-D-ribosyl)imidazole-4-carboxamide. It participates in amino-acid biosynthesis; L-histidine biosynthesis; L-histidine from 5-phospho-alpha-D-ribose 1-diphosphate: step 4/9. The sequence is that of 1-(5-phosphoribosyl)-5-[(5-phosphoribosylamino)methylideneamino] imidazole-4-carboxamide isomerase from Haloarcula marismortui (strain ATCC 43049 / DSM 3752 / JCM 8966 / VKM B-1809) (Halobacterium marismortui).